The primary structure comprises 105 residues: MDKFYNYNSSSHQALLSFKVKPNSKQNLISNFVIINNIQYLKLSIKAIPEQGKANSEIINYLAKEWKLSRSNIEIIKGHTHSLKTILIKNINEDYLNLIINSYIK.

It belongs to the UPF0235 family.

This chain is UPF0235 protein A1G_07140, found in Rickettsia rickettsii (strain Sheila Smith).